Consider the following 199-residue polypeptide: Rho-related protein racG (199 aa).

GTP-binding residues include Ala13, Gly15, Lys16, Thr17, Cys18, Tyr32, and Thr35. Residue Thr17 participates in Mg(2+) binding. 2 consecutive short sequence motifs (switch) follow at residues 26–37 (NAFPNEYIPTVF) and 57–75 (DTAG…YPST). Mg(2+) is bound at residue Thr35. Positions 116, 118, and 159 each coordinate GTP. Cys196 carries the post-translational modification Cysteine methyl ester. The S-geranylgeranyl cysteine moiety is linked to residue Cys196. Residues 197–199 (SLF) constitute a propeptide, removed in mature form.

This sequence belongs to the small GTPase superfamily. Rho family. The cofactor is Mg(2+).

It localises to the cell membrane. It is found in the cytoplasm. The protein localises to the cytoskeleton. It carries out the reaction GTP + H2O = GDP + phosphate + H(+). With respect to regulation, regulated by guanine nucleotide exchange factors (GEFs) which promote the exchange of bound GDP for free GTP, GTPase activating proteins (GAPs) which increase the GTP hydrolysis activity, and GDP dissociation inhibitors which inhibit the dissociation of the nucleotide from the GTPase. In terms of biological role, small GTPase which cycles between active GTP-bound and inactive GDP-bound states. Involved in actin cytoskeleton remodeling during capping of surface receptors and uroid formation. The chain is Rho-related protein racG from Entamoeba histolytica (strain ATCC 30459 / HM-1:IMSS / ABRM).